Here is an 874-residue protein sequence, read N- to C-terminus: Cyanophycin synthetase (874 aa).

Residues 224 to 480 form the ATP-grasp domain; that stretch reads KTTLAEAGIP…VAAPVIDMLF (257 aa). 495–501 contributes to the ATP binding site; that stretch reads GTNGKTT.

This sequence in the C-terminal section; belongs to the MurCDEF family. In terms of assembly, homodimer.

It catalyses the reaction [L-4-(L-arginin-2-N-yl)aspartate](n) + L-aspartate + ATP = [L-4-(L-arginin-2-N-yl)aspartate](n)-L-aspartate + ADP + phosphate + H(+). The enzyme catalyses [L-4-(L-arginin-2-N-yl)aspartate](n)-L-aspartate + L-arginine + ATP = [L-4-(L-arginin-2-N-yl)aspartate](n+1) + ADP + phosphate + H(+). Catalyzes the ATP-dependent polymerization of arginine and aspartate to multi-L-arginyl-poly-L-aspartic acid (cyanophycin; a water-insoluble reserve polymer). The polypeptide is Cyanophycin synthetase (cphA) (Geminocystis herdmanii (strain PCC 6308) (Synechocystis sp. (strain PCC 6308))).